We begin with the raw amino-acid sequence, 48 residues long: Large ribosomal subunit protein bL34c (48 aa).

Belongs to the bacterial ribosomal protein bL34 family.

The protein localises to the plastid. The protein resides in the chloroplast. This chain is Large ribosomal subunit protein bL34c, found in Thalassiosira pseudonana (Marine diatom).